We begin with the raw amino-acid sequence, 144 residues long: Small ribosomal subunit protein eS17 (144 aa).

It belongs to the eukaryotic ribosomal protein eS17 family.

This chain is Small ribosomal subunit protein eS17 (RPS17), found in Solanum lycopersicum (Tomato).